Here is a 265-residue protein sequence, read N- to C-terminus: 2-amino-3,7-dideoxy-D-threo-hept-6-ulosonate synthase (265 aa).

Asp25 acts as the Proton acceptor in catalysis. Residues 25-29 and 144-146 each bind 1-deoxy-D-threo-hexo-2,5-diulose 6-phosphate; these read DHGIT and YAR. Residue Tyr144 is the Proton donor of the active site. Lys174 serves as the catalytic Schiff-base intermediate with substrate. Residues 199-200 and 226-227 contribute to the 1-deoxy-D-threo-hexo-2,5-diulose 6-phosphate site; these read GG and GR.

The protein belongs to the DeoC/FbaB aldolase family. ADHS subfamily. In terms of assembly, homodecamer.

It catalyses the reaction 1-deoxy-D-threo-hexo-2,5-diulose 6-phosphate + L-aspartate 4-semialdehyde = 2,3-dioxopropyl phosphate + 2-amino-2,3,7-trideoxy-D-lyxo-hept-6-ulosonate. Its function is as follows. Catalyzes a transaldol reaction between 6-deoxy-5-ketofructose 1-phosphate (DKFP) and L-aspartate semialdehyde (ASA) with an elimination of hydroxypyruvaldehyde phosphate to yield 2-amino-3,7-dideoxy-D-threo-hept-6-ulosonate (ADH). Plays a key role in an alternative pathway of the biosynthesis of 3-dehydroquinate (DHQ), which is involved in the canonical pathway for the biosynthesis of aromatic amino acids. The protein is 2-amino-3,7-dideoxy-D-threo-hept-6-ulosonate synthase of Halobacterium salinarum (strain ATCC 700922 / JCM 11081 / NRC-1) (Halobacterium halobium).